The primary structure comprises 242 residues: MTQIGSFDLEKKTAVVAVILEKPLENSKKAAEKGADILEIRLDLLGIRTPERAAEVIREIKAETGIPIIVTSRSGAEGGKWDGKEEDRTGLLINLLSLKDGPDAIDIELSAGMKERNRVIKAAKDRETAVIVSSHDFLKTPPLQNMRTIIEEMFLAGADIAKLAVMPLSVGDTLNLLRVTLDFKDAGKSVCTIAMGSQGKHTRVVAPFYGSVLTYASIESNASAAPGQLPVDEVKKIMEMLK.

3-dehydroquinate is bound by residues 39–41 (EIR) and Arg-73. The active-site Proton donor/acceptor is His-135. Residue Lys-162 is the Schiff-base intermediate with substrate of the active site. The 3-dehydroquinate site is built by Arg-203 and Gln-228.

This sequence belongs to the type-I 3-dehydroquinase family. Homodimer.

It carries out the reaction 3-dehydroquinate = 3-dehydroshikimate + H2O. It participates in metabolic intermediate biosynthesis; chorismate biosynthesis; chorismate from D-erythrose 4-phosphate and phosphoenolpyruvate: step 3/7. Its function is as follows. Involved in the third step of the chorismate pathway, which leads to the biosynthesis of aromatic amino acids. Catalyzes the cis-dehydration of 3-dehydroquinate (DHQ) and introduces the first double bond of the aromatic ring to yield 3-dehydroshikimate. This Methanosarcina mazei (strain ATCC BAA-159 / DSM 3647 / Goe1 / Go1 / JCM 11833 / OCM 88) (Methanosarcina frisia) protein is 3-dehydroquinate dehydratase.